We begin with the raw amino-acid sequence, 397 residues long: 1-deoxy-D-xylulose 5-phosphate reductoisomerase (397 aa).

NADPH is bound by residues serine 10, glycine 11, serine 12, isoleucine 13, alanine 36, arginine 37, and asparagine 124. Position 125 (lysine 125) interacts with 1-deoxy-D-xylulose 5-phosphate. Glutamate 126 provides a ligand contact to NADPH. A Mn(2+)-binding site is contributed by aspartate 150. Serine 151, glutamate 152, serine 186, and histidine 209 together coordinate 1-deoxy-D-xylulose 5-phosphate. Glutamate 152 lines the Mn(2+) pocket. Glycine 215 lines the NADPH pocket. Positions 222, 227, 228, and 231 each coordinate 1-deoxy-D-xylulose 5-phosphate. Glutamate 231 contacts Mn(2+).

It belongs to the DXR family. Requires Mg(2+) as cofactor. Mn(2+) serves as cofactor.

It carries out the reaction 2-C-methyl-D-erythritol 4-phosphate + NADP(+) = 1-deoxy-D-xylulose 5-phosphate + NADPH + H(+). It participates in isoprenoid biosynthesis; isopentenyl diphosphate biosynthesis via DXP pathway; isopentenyl diphosphate from 1-deoxy-D-xylulose 5-phosphate: step 1/6. Functionally, catalyzes the NADPH-dependent rearrangement and reduction of 1-deoxy-D-xylulose-5-phosphate (DXP) to 2-C-methyl-D-erythritol 4-phosphate (MEP). This is 1-deoxy-D-xylulose 5-phosphate reductoisomerase from Aeromonas hydrophila subsp. hydrophila (strain ATCC 7966 / DSM 30187 / BCRC 13018 / CCUG 14551 / JCM 1027 / KCTC 2358 / NCIMB 9240 / NCTC 8049).